Here is a 326-residue protein sequence, read N- to C-terminus: Biotin synthase (326 aa).

Residues 50 to 279 enclose the Radical SAM core domain; it reads FNGEKVDVEQ…ESVIKISGGR (230 aa). [4Fe-4S] cluster contacts are provided by C68, C72, and C75. [2Fe-2S] cluster-binding residues include C112, C145, C204, and K274.

Belongs to the radical SAM superfamily. Biotin synthase family. As to quaternary structure, homodimer. It depends on [4Fe-4S] cluster as a cofactor. [2Fe-2S] cluster is required as a cofactor.

The catalysed reaction is (4R,5S)-dethiobiotin + (sulfur carrier)-SH + 2 reduced [2Fe-2S]-[ferredoxin] + 2 S-adenosyl-L-methionine = (sulfur carrier)-H + biotin + 2 5'-deoxyadenosine + 2 L-methionine + 2 oxidized [2Fe-2S]-[ferredoxin]. It participates in cofactor biosynthesis; biotin biosynthesis; biotin from 7,8-diaminononanoate: step 2/2. Its function is as follows. Catalyzes the conversion of dethiobiotin (DTB) to biotin by the insertion of a sulfur atom into dethiobiotin via a radical-based mechanism. This Nitrosopumilus maritimus (strain SCM1) protein is Biotin synthase.